A 747-amino-acid polypeptide reads, in one-letter code: MGRLNEQRLFQPDLCDVDLVLVPQRSVFPAHKGVLAAYSQFFHSLFTQNKQLQRVELSLEALAPGGLQQILNFIYTSKLLVNAANVHEVLSAASLLQMADIAASCQELLDARSLGPPGPGTVALAQPAASCTPAAPPYYCDIKQEADTPGLPKIYAREGPDPYSVRVEDGAGTAGGTVPATIGPAQPFFKEEKEGGVEEAGGPPASLCKLEGGEELEEELGGSGTYSRREQSQIIVEVNLNNQTLHVSTGPEGKPGAGPSPATVVLGREDGLQRHSDEEEEDDEEEEEEEEEEEGGGSGREEEEEEEGGSQGEEEEEEEDGHSEQEEEEEEEEEEGPSEQDQESSEEEEGEEGEAGGKQGPRGSRSSRADPPPHSHMATRSRENARRRGTPEPEEAGRRGGKRPKPPPGVASASARGPPATDGLGAKVKLEEKQHHPCQKCPRVFNNRWYLEKHMNVTHSRMQICDQCGKRFLLESELLLHRQTDCERNIQCVTCGKAFKKLWSLHEHNKIVHGYAEKKFSCEICEKKFYTMAHVRKHMVAHTKDMPFTCETCGKSFKRSMSLKVHSLQHSGEKPFRCENCNERFQYKYQLRSHMSIHIGHKQFMCQWCGKDFNMKQYFDEHMKTHTGEKPYICEICGKSFTSRPNMKRHRRTHTGEKPYPCDVCGQRFRFSNMLKAHKEKCFRVSHTLAGDGVPAAPGLPPTQPQAHALPLLPGLPQTLPPPPHLPPPPPLFPTTASPGGRMNANN.

Residues 15-83 form the BTB domain; sequence CDVDLVLVPQ…IYTSKLLVNA (69 aa). K190 participates in a covalent cross-link: Glycyl lysine isopeptide (Lys-Gly) (interchain with G-Cter in SUMO2). Residues 243 to 424 form a disordered region; sequence QTLHVSTGPE…ARGPPATDGL (182 aa). Positions 267-277 are enriched in basic and acidic residues; that stretch reads GREDGLQRHSD. The segment covering 278 to 354 has biased composition (acidic residues); that stretch reads EEEEDDEEEE…SEEEEGEEGE (77 aa). The segment covering 380–398 has biased composition (basic and acidic residues); that stretch reads RSRENARRRGTPEPEEAGR. The segment at 436–459 adopts a C2H2-type 1 zinc-finger fold; sequence HPCQKCPRVFNNRWYLEKHMNVTH. Residues 463-485 form a C2H2-type 2; degenerate zinc finger; it reads QICDQCGKRFLLESELLLHRQTD. 7 consecutive C2H2-type zinc fingers follow at residues 490–513, 520–542, 548–570, 576–598, 604–626, 632–654, and 660–687; these read IQCV…KIVH, FSCE…MVAH, FTCE…SLQH, FRCE…MSIH, FMCQ…MKTH, YICE…RRTH, and YPCD…RVSH. A disordered region spans residues 694 to 747; it reads VPAAPGLPPTQPQAHALPLLPGLPQTLPPPPHLPPPPPLFPTTASPGGRMNANN. Residues 719–733 are compositionally biased toward pro residues; that stretch reads TLPPPPHLPPPPPLF.

Belongs to the krueppel C2H2-type zinc-finger protein family.

The protein localises to the nucleus. May be involved in transcriptional regulation. The polypeptide is Zinc finger and BTB domain-containing protein 47 (ZBTB47) (Homo sapiens (Human)).